A 352-amino-acid chain; its full sequence is Fatty acid desaturase (352 aa).

2 helical membrane-spanning segments follow: residues 28 to 48 and 55 to 75; these read SLIQ…LAYL and LLTL…FIIF. The Histidine box-1 motif lies at 76–80; it reads HDCCH. Residues 89–109 traverse the membrane as a helical segment; it reads YNHILGFLTGVLTLFPYLQWQ. The short motif at 112-116 is the Histidine box-2 element; it reads HSIHH. The next 3 membrane-spanning stretches (helical) occupy residues 151 to 171, 186 to 206, and 209 to 229; these read LYRN…LITN, TYLT…IFGW, and FLLV…WLFY. The Histidine box-3 motif lies at 274-278; it reads HHVHH.

This sequence belongs to the fatty acid desaturase type 1 family.

The protein localises to the cell membrane. It participates in lipid metabolism; fatty acid metabolism. Catalyzes the introduction of a cis-double bond at the delta(5) position of existing saturated fatty acids attached to membrane phospholipids. It is not strictly specific for palmitic acid (C16) but can also accept C14 as well as C18 species to yield unsaturated fatty acids. The sequence is that of Fatty acid desaturase (des) from Bacillus subtilis (strain 168).